The following is a 31-amino-acid chain: Malate dehydrogenase (31 aa).

11 to 17 serves as a coordination point for NAD(+); sequence GAAGQIG.

This sequence belongs to the LDH/MDH superfamily. MDH type 2 family.

The catalysed reaction is (S)-malate + NAD(+) = oxaloacetate + NADH + H(+). In terms of biological role, catalyzes the reversible oxidation of malate to oxaloacetate. The polypeptide is Malate dehydrogenase (mdh) (Streptomyces atratus).